The primary structure comprises 614 residues: RNA polymerase sigma factor RpoD (614 aa).

The interval 178–222 (THIGSDLSQSERDKDDSKDDSKDDDEDEEEEGPKGPDPEESKERF) is disordered. A compositionally biased stretch (basic and acidic residues) spans 186–198 (QSERDKDDSKDDS). Over residues 199-208 (KDDDEDEEEE) the composition is skewed to acidic residues. Positions 209–222 (GPKGPDPEESKERF) are enriched in basic and acidic residues. The tract at residues 380–450 (MVEANLRLVI…TRSIADQART (71 aa)) is sigma-70 factor domain-2. The Interaction with polymerase core subunit RpoC signature appears at 404–407 (DLIQ). Residues 459–535 (ETINKLNRIS…DTTLELPLDS (77 aa)) form a sigma-70 factor domain-3 region. Residues 548 to 601 (VLAGLTAREAKVLRMRFGIDMNTDHTLEEVGKQFDVTRERIRQIEAKALRKLRH) are sigma-70 factor domain-4. The segment at residues 574 to 593 (LEEVGKQFDVTRERIRQIEA) is a DNA-binding region (H-T-H motif).

The protein belongs to the sigma-70 factor family. RpoD/SigA subfamily. Interacts transiently with the RNA polymerase catalytic core.

It is found in the cytoplasm. Functionally, sigma factors are initiation factors that promote the attachment of RNA polymerase to specific initiation sites and are then released. This sigma factor is the primary sigma factor during exponential growth. The protein is RNA polymerase sigma factor RpoD of Shewanella violacea (strain JCM 10179 / CIP 106290 / LMG 19151 / DSS12).